Here is a 339-residue protein sequence, read N- to C-terminus: DNA-directed RNA polymerase subunit alpha (339 aa).

Residues 1 to 235 (MVLQKNWQSL…DQLQLFINFD (235 aa)) are alpha N-terminal domain (alpha-NTD). The alpha C-terminal domain (alpha-CTD) stretch occupies residues 251-339 (FNRNLLRKVD…DLAKRLDEPF (89 aa)).

The protein belongs to the RNA polymerase alpha chain family. In terms of assembly, homodimer. The RNAP catalytic core consists of 2 alpha, 1 beta, 1 beta' and 1 omega subunit. When a sigma factor is associated with the core the holoenzyme is formed, which can initiate transcription.

It catalyses the reaction RNA(n) + a ribonucleoside 5'-triphosphate = RNA(n+1) + diphosphate. Its function is as follows. DNA-dependent RNA polymerase catalyzes the transcription of DNA into RNA using the four ribonucleoside triphosphates as substrates. This is DNA-directed RNA polymerase subunit alpha from Gluconacetobacter diazotrophicus (strain ATCC 49037 / DSM 5601 / CCUG 37298 / CIP 103539 / LMG 7603 / PAl5).